We begin with the raw amino-acid sequence, 72 residues long: uncharacterized protein (72 aa).

This is an uncharacterized protein from Vaccinia virus (strain Copenhagen) (VACV).